Consider the following 505-residue polypeptide: Maturase K (505 aa).

This sequence belongs to the intron maturase 2 family. MatK subfamily.

The protein resides in the plastid. It localises to the chloroplast. Its function is as follows. Usually encoded in the trnK tRNA gene intron. Probably assists in splicing its own and other chloroplast group II introns. This is Maturase K from Phaulothamnus spinescens (Snake-eyes).